The chain runs to 221 residues: MSRYRGARLRIVRQFDLKQTLRGLTRKRTDNRCMPGQHRKKRNDSTKKTKNSKKVAQYQIRLQEKQKLRFNYGITESQLINYVRQARKTKGSTGETLLQLLEMRLDNIVFRLGMAPTIPAARQLVNHGHIVVNNKKVDISSYQCQSQDVISVTKNKTIRTLISNFINSKTPKNLLRNPQIPSHLIFNKSTLLGTIKSVVPRRWIGLKIKELLIVEFYSRKA.

Residues 26–53 (RKRTDNRCMPGQHRKKRNDSTKKTKNSK) form a disordered region. A compositionally biased stretch (basic residues) spans 37–53 (QHRKKRNDSTKKTKNSK). The region spanning 103–161 (MRLDNIVFRLGMAPTIPAARQLVNHGHIVVNNKKVDISSYQCQSQDVISVTKNKTIRTL) is the S4 RNA-binding domain.

It belongs to the universal ribosomal protein uS4 family. Part of the 30S ribosomal subunit. Contacts protein S5. The interaction surface between S4 and S5 is involved in control of translational fidelity.

The protein localises to the plastid. The protein resides in the chloroplast. Functionally, one of the primary rRNA binding proteins, it binds directly to 16S rRNA where it nucleates assembly of the body of the 30S subunit. With S5 and S12 plays an important role in translational accuracy. This is Small ribosomal subunit protein uS4c (rps4) from Pleurastrum terricola (Filamentous green alga).